A 287-amino-acid polypeptide reads, in one-letter code: Bifunctional protein FolD (287 aa).

NADP(+)-binding positions include 171–173 (GHS), Ile-196, and Ile-237.

The protein belongs to the tetrahydrofolate dehydrogenase/cyclohydrolase family. Homodimer.

The catalysed reaction is (6R)-5,10-methylene-5,6,7,8-tetrahydrofolate + NADP(+) = (6R)-5,10-methenyltetrahydrofolate + NADPH. The enzyme catalyses (6R)-5,10-methenyltetrahydrofolate + H2O = (6R)-10-formyltetrahydrofolate + H(+). It functions in the pathway one-carbon metabolism; tetrahydrofolate interconversion. Functionally, catalyzes the oxidation of 5,10-methylenetetrahydrofolate to 5,10-methenyltetrahydrofolate and then the hydrolysis of 5,10-methenyltetrahydrofolate to 10-formyltetrahydrofolate. The chain is Bifunctional protein FolD from Methanosarcina mazei (strain ATCC BAA-159 / DSM 3647 / Goe1 / Go1 / JCM 11833 / OCM 88) (Methanosarcina frisia).